The chain runs to 642 residues: Threonine--tRNA ligase (642 aa).

The region spanning 1–61 is the TGS domain; it reads MPVITLPDGS…ENDAQLSIIT (61 aa). Residues 243 to 534 form a catalytic region; it reads DHRKIGKQLD…LTEEFAGFFP (292 aa). Residues Cys334, His385, and His511 each coordinate Zn(2+).

Belongs to the class-II aminoacyl-tRNA synthetase family. Homodimer. It depends on Zn(2+) as a cofactor.

The protein resides in the cytoplasm. It carries out the reaction tRNA(Thr) + L-threonine + ATP = L-threonyl-tRNA(Thr) + AMP + diphosphate + H(+). Its function is as follows. Catalyzes the attachment of threonine to tRNA(Thr) in a two-step reaction: L-threonine is first activated by ATP to form Thr-AMP and then transferred to the acceptor end of tRNA(Thr). Also edits incorrectly charged L-seryl-tRNA(Thr). This is Threonine--tRNA ligase from Enterobacter sp. (strain 638).